Here is a 461-residue protein sequence, read N- to C-terminus: UDP-N-acetylmuramate--L-alanine ligase (461 aa).

Residue 112–118 (GTHGKTT) coordinates ATP.

This sequence belongs to the MurCDEF family.

The protein resides in the cytoplasm. The enzyme catalyses UDP-N-acetyl-alpha-D-muramate + L-alanine + ATP = UDP-N-acetyl-alpha-D-muramoyl-L-alanine + ADP + phosphate + H(+). The protein operates within cell wall biogenesis; peptidoglycan biosynthesis. Functionally, cell wall formation. This chain is UDP-N-acetylmuramate--L-alanine ligase, found in Geobacter sp. (strain M21).